Consider the following 1662-residue polypeptide: ABC transporter A family member 5 (1662 aa).

A run of 7 helical transmembrane segments spans residues 30-50 (IVFP…VQLF), 242-262 (SVFV…ELVV), 284-304 (ISWI…IIVI), 317-337 (IIVI…AFIF), 346-366 (FAGL…IFIG), 377-397 (LLLC…IMSI), and 417-437 (QIIG…WYLD). The ABC transporter 1 domain occupies 505–739 (ISIRNLRKEF…YGVGYLLTCS (235 aa)). 541–548 (GPNGSGKS) provides a ligand contact to ATP. 7 helical membrane-spanning segments follow: residues 872–892 (FKAF…SIIV), 1052–1072 (IVYF…SFAG), 1102–1122 (LWDY…LAIV), 1130–1150 (FGLF…LSYL), 1163–1183 (GAIT…MIIL), 1201–1221 (IIDI…VIFI), and 1246–1266 (STPI…ILLI). Residues 1322–1557 (LQYKGLHKLF…FGAGYSVEVK (236 aa)) form the ABC transporter 2 domain. 1360–1367 (GLNGAGKT) contributes to the ATP binding site.

Belongs to the ABC transporter superfamily. ABCA family.

It localises to the membrane. The polypeptide is ABC transporter A family member 5 (abcA5) (Dictyostelium discoideum (Social amoeba)).